Consider the following 157-residue polypeptide: Endoribonuclease YbeY (157 aa).

Positions 113, 117, and 123 each coordinate Zn(2+).

The protein belongs to the endoribonuclease YbeY family. Zn(2+) serves as cofactor.

It is found in the cytoplasm. Its function is as follows. Single strand-specific metallo-endoribonuclease involved in late-stage 70S ribosome quality control and in maturation of the 3' terminus of the 16S rRNA. The chain is Endoribonuclease YbeY from Ehrlichia ruminantium (strain Gardel).